The chain runs to 241 residues: dTTP/UTP pyrophosphatase (241 aa).

Ser-38 carries the phosphoserine modification. Asp-105 serves as the catalytic Proton acceptor.

It belongs to the Maf family. YhdE subfamily. The cofactor is a divalent metal cation.

The protein localises to the cytoplasm. The protein resides in the nucleus. The enzyme catalyses dTTP + H2O = dTMP + diphosphate + H(+). It catalyses the reaction UTP + H2O = UMP + diphosphate + H(+). Functionally, nucleoside triphosphate pyrophosphatase that hydrolyzes dTTP and UTP. May have a dual role in cell division arrest and in preventing the incorporation of modified nucleotides into cellular nucleic acids. The protein is dTTP/UTP pyrophosphatase of Schizosaccharomyces pombe (strain 972 / ATCC 24843) (Fission yeast).